Consider the following 77-residue polypeptide: Lantipeptide prochlorosin 4.3 (77 aa).

A propeptide spanning residues methionine 1–glycine 64 is cleaved from the precursor. Threonine 65 bears the 2,3-didehydrobutyrine mark. Positions serine 67–cysteine 70 form a cross-link, lanthionine (Ser-Cys). Positions threonine 72 to cysteine 76 form a cross-link, beta-methyllanthionine (Thr-Cys).

Cross-links are proved in vitro, when coepressed in E.coli with the ProcM lanthionine synthetase. In terms of processing, the lanthionine residue has both a DL configuration (with 2S,6R stereochemistry) and a LL configuration (with 2R,6R stereochemistry). DL and LL diastomers have a 4:1 ratio. It is unknown whether nonenzymatic cyclization occur, but authors favor a model in which ProcM does generate all thioether cross-links. The beta-methyllanthionine residue has a DL configuration (with 2S,3S,6R stereochemistry). Post-translationally, maturation of prochlorosin involves the enzymatic conversion of Thr, and Ser into dehydrated AA and the formation of thioether bonds with cysteines. This is followed by membrane translocation and cleavage of the modified precursor.

Its subcellular location is the secreted. Lanthionine-containing peptide (lantipeptide) with unknown function. Does not show antibiotic activity against Lactococcus lactis 117 and Bacillus subtilis 6633 bacteria. Organisms that produce this peptide live in oligotrophic environments at very dilute concentrations, suggesting this peptide is not secreted to influence other bacteria. The polypeptide is Lantipeptide prochlorosin 4.3 (Prochlorococcus marinus (strain MIT 9313)).